We begin with the raw amino-acid sequence, 460 residues long: Serine hydroxymethyltransferase, cytosolic (460 aa).

K244 is modified (N6-(pyridoxal phosphate)lysine).

This sequence belongs to the SHMT family. As to quaternary structure, homotetramer. Pyridoxal 5'-phosphate serves as cofactor.

It is found in the cytoplasm. It catalyses the reaction (6R)-5,10-methylene-5,6,7,8-tetrahydrofolate + glycine + H2O = (6S)-5,6,7,8-tetrahydrofolate + L-serine. The protein operates within one-carbon metabolism; tetrahydrofolate interconversion. Functionally, interconversion of serine and glycine. This is Serine hydroxymethyltransferase, cytosolic (SHMT-1) from Encephalitozoon cuniculi (strain GB-M1) (Microsporidian parasite).